The sequence spans 266 residues: uncharacterized protein (266 aa).

The region spanning 35–131 (VLVGEGVLVK…WMLHIERCVT (97 aa)) is the PH domain. The segment at 152–212 (DGEAVKCMVC…VCDHCFDSLS (61 aa)) adopts an FYVE-type zinc-finger fold. Zn(2+) is bound by residues Cys158, Cys161, Cys175, Cys178, Cys183, Cys186, Cys204, and Cys207. The tract at residues 213-266 (SATPGQEESEPKTGNRLHHEDSSSDSEDEVNGSGRSSNESRPTFYREDVQQPAT) is disordered. 2 stretches are compositionally biased toward basic and acidic residues: residues 221–234 (SEPKTGNRLHHEDS) and 256–266 (FYREDVQQPAT).

This is an uncharacterized protein from Caenorhabditis elegans.